The following is a 368-amino-acid chain: uncharacterized protein (368 aa).

Residues 237-287 (ESLSIPSRRRPSSIAPIGTRPSRKEIAFSNSSTPTDQTLRPPNPPAANGNA) form a disordered region. Over residues 238–253 (SLSIPSRRRPSSIAPI) the composition is skewed to low complexity. Residues 264–276 (FSNSSTPTDQTLR) are compositionally biased toward polar residues.

This is an uncharacterized protein from Schizosaccharomyces pombe (strain 972 / ATCC 24843) (Fission yeast).